A 310-amino-acid polypeptide reads, in one-letter code: 3,5-dioxohexanoate:acetyl-CoA acetone transferase (310 aa).

Positions 49, 51, and 258 each coordinate Zn(2+).

Belongs to the BKACE family. Zn(2+) serves as cofactor.

It catalyses the reaction 3,5-dioxohexanoate + acetyl-CoA = acetoacetyl-CoA + acetoacetate. In terms of biological role, catalyzes the condensation of 3,5-dioxohexanoate and acetyl-CoA, forming acetoacetate and acetoacetyl-CoA. May be involved in fatty acid biosynthesis rescue via triacetic acid lactone. In Paraburkholderia graminis (strain ATCC 700544 / DSM 17151 / LMG 18924 / NCIMB 13744 / C4D1M), this protein is 3,5-dioxohexanoate:acetyl-CoA acetone transferase.